The primary structure comprises 221 residues: GTP cyclohydrolase 1 (221 aa).

3 residues coordinate Zn(2+): Cys-109, His-112, and Cys-180.

This sequence belongs to the GTP cyclohydrolase I family. In terms of assembly, toroid-shaped homodecamer, composed of two pentamers of five dimers.

The catalysed reaction is GTP + H2O = 7,8-dihydroneopterin 3'-triphosphate + formate + H(+). It participates in cofactor biosynthesis; 7,8-dihydroneopterin triphosphate biosynthesis; 7,8-dihydroneopterin triphosphate from GTP: step 1/1. This chain is GTP cyclohydrolase 1, found in Blochmanniella pennsylvanica (strain BPEN).